Here is a 429-residue protein sequence, read N- to C-terminus: Multifunctional CCA protein (429 aa).

ATP-binding residues include Gly-27 and Arg-30. CTP-binding residues include Gly-27 and Arg-30. Mg(2+)-binding residues include Asp-40 and Asp-42. ATP contacts are provided by Arg-110, Arg-162, and Arg-165. 3 residues coordinate CTP: Arg-110, Arg-162, and Arg-165. One can recognise an HD domain in the interval 251-352; it reads TGVHTMMVVD…VRLLERCDAL (102 aa).

Belongs to the tRNA nucleotidyltransferase/poly(A) polymerase family. Bacterial CCA-adding enzyme type 1 subfamily. As to quaternary structure, monomer. Can also form homodimers and oligomers. Requires Mg(2+) as cofactor. Ni(2+) serves as cofactor.

It carries out the reaction a tRNA precursor + 2 CTP + ATP = a tRNA with a 3' CCA end + 3 diphosphate. The catalysed reaction is a tRNA with a 3' CCA end + 2 CTP + ATP = a tRNA with a 3' CCACCA end + 3 diphosphate. In terms of biological role, catalyzes the addition and repair of the essential 3'-terminal CCA sequence in tRNAs without using a nucleic acid template. Adds these three nucleotides in the order of C, C, and A to the tRNA nucleotide-73, using CTP and ATP as substrates and producing inorganic pyrophosphate. tRNA 3'-terminal CCA addition is required both for tRNA processing and repair. Also involved in tRNA surveillance by mediating tandem CCA addition to generate a CCACCA at the 3' terminus of unstable tRNAs. While stable tRNAs receive only 3'-terminal CCA, unstable tRNAs are marked with CCACCA and rapidly degraded. This Ralstonia nicotianae (strain ATCC BAA-1114 / GMI1000) (Ralstonia solanacearum) protein is Multifunctional CCA protein.